The primary structure comprises 1507 residues: Protein TIC 214 (1507 aa).

6 helical membrane passes run 4–24 (IYLV…LPIG), 53–73 (TILL…VLAL), 81–101 (LWVK…IYLY), 129–149 (AFLE…NPVF), 163–183 (ISTF…IFFL), and 202–222 (LVKI…SFLC).

The protein belongs to the TIC214 family. In terms of assembly, part of the Tic complex.

Its subcellular location is the plastid. It is found in the chloroplast inner membrane. In terms of biological role, involved in protein precursor import into chloroplasts. May be part of an intermediate translocation complex acting as a protein-conducting channel at the inner envelope. The sequence is that of Protein TIC 214 from Staurastrum punctulatum (Green alga).